A 240-amino-acid polypeptide reads, in one-letter code: Triosephosphate isomerase (240 aa).

9-11 (NWK) provides a ligand contact to substrate. His-94 serves as the catalytic Electrophile. The active-site Proton acceptor is the Glu-163. Residues Gly-169, Ser-202, and 223–224 (GG) contribute to the substrate site.

The protein belongs to the triosephosphate isomerase family. Homodimer.

The protein resides in the cytoplasm. The enzyme catalyses D-glyceraldehyde 3-phosphate = dihydroxyacetone phosphate. Its pathway is carbohydrate biosynthesis; gluconeogenesis. It functions in the pathway carbohydrate degradation; glycolysis; D-glyceraldehyde 3-phosphate from glycerone phosphate: step 1/1. Its function is as follows. Involved in the gluconeogenesis. Catalyzes stereospecifically the conversion of dihydroxyacetone phosphate (DHAP) to D-glyceraldehyde-3-phosphate (G3P). The chain is Triosephosphate isomerase from Gloeobacter violaceus (strain ATCC 29082 / PCC 7421).